A 106-amino-acid polypeptide reads, in one-letter code: UPF0145 protein NE1032 (106 aa).

It belongs to the UPF0145 family.

The sequence is that of UPF0145 protein NE1032 from Nitrosomonas europaea (strain ATCC 19718 / CIP 103999 / KCTC 2705 / NBRC 14298).